A 224-amino-acid polypeptide reads, in one-letter code: Orotate phosphoribosyltransferase (224 aa).

A 5-phospho-alpha-D-ribose 1-diphosphate-binding site is contributed by Lys-29. 37–38 (FF) is a binding site for orotate. Residues 75–76 (YK), Arg-105, Lys-106, Lys-109, His-111, and 130–138 (DDVITAGTS) contribute to the 5-phospho-alpha-D-ribose 1-diphosphate site. The orotate site is built by Thr-134 and Arg-162.

It belongs to the purine/pyrimidine phosphoribosyltransferase family. PyrE subfamily. As to quaternary structure, homodimer. Requires Mg(2+) as cofactor.

It carries out the reaction orotidine 5'-phosphate + diphosphate = orotate + 5-phospho-alpha-D-ribose 1-diphosphate. It functions in the pathway pyrimidine metabolism; UMP biosynthesis via de novo pathway; UMP from orotate: step 1/2. Its function is as follows. Catalyzes the transfer of a ribosyl phosphate group from 5-phosphoribose 1-diphosphate to orotate, leading to the formation of orotidine monophosphate (OMP). The protein is Orotate phosphoribosyltransferase of Bordetella parapertussis (strain 12822 / ATCC BAA-587 / NCTC 13253).